The sequence spans 459 residues: UDP-N-acetylmuramoylalanine--D-glutamate ligase (459 aa).

118–124 (GTNGKTT) contacts ATP.

Belongs to the MurCDEF family.

Its subcellular location is the cytoplasm. The enzyme catalyses UDP-N-acetyl-alpha-D-muramoyl-L-alanine + D-glutamate + ATP = UDP-N-acetyl-alpha-D-muramoyl-L-alanyl-D-glutamate + ADP + phosphate + H(+). It participates in cell wall biogenesis; peptidoglycan biosynthesis. Functionally, cell wall formation. Catalyzes the addition of glutamate to the nucleotide precursor UDP-N-acetylmuramoyl-L-alanine (UMA). The protein is UDP-N-acetylmuramoylalanine--D-glutamate ligase of Desulfosudis oleivorans (strain DSM 6200 / JCM 39069 / Hxd3) (Desulfococcus oleovorans).